The primary structure comprises 294 residues: Aquaporin NIP1-2 (294 aa).

Residue M1 is modified to N-acetylmethionine. The next 2 helical transmembrane spans lie at 54–74 and 82–102; these read LMAEVLGTYFLIFAGCAAVAV and VTLPGIAIVWGLTVMVLVYSL. An NPA 1 motif is present at residues 111–113; sequence NPA. The next 3 membrane-spanning stretches (helical) occupy residues 133 to 153, 177 to 197, and 201 to 221; these read VISQVIGSTLAAATLRLLFGL, SFVIEFIITFYLMFVISGVAT, and AIGELAGLAVGSTVLLNVIIA. Positions 230–232 match the NPA 2 motif; sequence NPG. A helical transmembrane segment spans residues 248–268; the sequence is WIYIVSPIVGAVSGAWVYNMV. S283 bears the Phosphoserine mark.

This sequence belongs to the MIP/aquaporin (TC 1.A.8) family. NIP (TC 1.A.8.12) subfamily. Expressed in developing seeds.

It is found in the membrane. In terms of biological role, water channel probably required to promote glycerol permeability and water transport across cell membranes. The protein is Aquaporin NIP1-2 (NIP1-2) of Arabidopsis thaliana (Mouse-ear cress).